The following is a 758-amino-acid chain: Spastin (758 aa).

Residues 1–103 (MVRTKNQSSS…SPRSGHHHSY (103 aa)) form a disordered region. Residues 1-121 (MVRTKNQSSS…KQNLYVVSFP (121 aa)) are Cytoplasmic-facing. Positions 1–210 (MVRTKNQSSS…RPIQPLEMAA (210 aa)) are required for localization to punctate cytoplasmic foci. Low complexity-rich tracts occupy residues 8-28 (SSSSSASSSSTKSPIKSSSGA), 43-58 (RSSSASNVAAVVAGGS), 66-76 (SSNRRSPGSSP), and 85-95 (TDDLTPTTCSP). An intramembrane region (helical) is located at residues 122–142 (IIFLFNVLRSLIYQLFCIFRY). Over 143 to 758 (LYGASTKVIY…WSQDYGDITI (616 aa)) the chain is Cytoplasmic. Polar residues-rich tracts occupy residues 169–180 (SKEQQQSLNHPS) and 189–198 (QEQQLSNQPQ). The interval 169–202 (SKEQQQSLNHPSELNREGDGQEQQLSNQPQRFRP) is disordered. The segment at 208–758 (MAANRPGGGY…WSQDYGDITI (551 aa)) is sufficient for interaction with microtubules and microtubule severing. Residues 233-308 (HRRAFEYISK…SMARDRLHFL (76 aa)) form the MIT domain. Residues 353–454 (RVRSSGYGPK…GPSGSGASTP (102 aa)) are disordered. Polar residues-rich tracts occupy residues 390 to 406 (NKSQTLPRNLGSKTSVG) and 425 to 454 (QFSSGRNTPPQRSRTPINNNGPSGSGASTP). Residues 443–455 (NNGPSGSGASTPV) form a required for interaction with microtubules region. 523–530 (GPPGNGKT) contributes to the ATP binding site.

It belongs to the AAA ATPase family. Spastin subfamily. In terms of assembly, homohexamer. The homohexamer is stabilized by ATP-binding. The homohexamer may adopt a ring conformation through which microtubules pass prior to being severed. Interacts with microtubules. Interacts with atl; may be involved in microtubule dynamics.

It is found in the membrane. Its subcellular location is the cytoplasm. The protein resides in the cytoskeleton. The protein localises to the microtubule organizing center. It localises to the centrosome. It is found in the chromosome. Its subcellular location is the lipid droplet. It carries out the reaction n ATP + n H2O + a microtubule = n ADP + n phosphate + (n+1) alpha/beta tubulin heterodimers.. Its function is as follows. ATP-dependent microtubule severing protein. Stimulates microtubule minus-end depolymerization and poleward microtubule flux in the mitotic spindle. Regulates microtubule stability in the neuromuscular junction synapse. Involved in lipid metabolism by regulating the size and distribution of lipid droplets. Involved in axon regeneration by regulating microtubule severing. The polypeptide is Spastin (Drosophila sechellia (Fruit fly)).